The chain runs to 179 residues: Translation initiation factor IF-3 (179 aa).

The protein belongs to the IF-3 family. Monomer.

The protein localises to the cytoplasm. In terms of biological role, IF-3 binds to the 30S ribosomal subunit and shifts the equilibrium between 70S ribosomes and their 50S and 30S subunits in favor of the free subunits, thus enhancing the availability of 30S subunits on which protein synthesis initiation begins. This is Translation initiation factor IF-3 from Treponema pallidum (strain Nichols).